A 234-amino-acid polypeptide reads, in one-letter code: Two-component response regulator ARR9 (234 aa).

The 138-residue stretch at 10–147 folds into the Response regulatory domain; that stretch reads HVLAVDDSLF…DLNKLKPHMM (138 aa). D80 carries the post-translational modification 4-aspartylphosphate.

This sequence belongs to the ARR family. Type-A subfamily. In terms of assembly, interacts with AHP1 and AHP3. Post-translationally, two-component system major event consists of a His-to-Asp phosphorelay between a sensor histidine kinase (HK) and a response regulator (RR). In plants, the His-to-Asp phosphorelay involves an additional intermediate named Histidine-containing phosphotransfer protein (HPt). This multistep phosphorelay consists of a His-Asp-His-Asp sequential transfer of a phosphate group between first a His and an Asp of the HK protein, followed by the transfer to a conserved His of the HPt protein and finally the transfer to an Asp in the receiver domain of the RR protein. In terms of tissue distribution, predominantly expressed in roots.

It localises to the nucleus. Functionally, functions as a response regulator involved in His-to-Asp phosphorelay signal transduction system. Phosphorylation of the Asp residue in the receiver domain activates the ability of the protein to promote the transcription of target genes. Type-A response regulators seem to act as negative regulators of the cytokinin signaling. This is Two-component response regulator ARR9 (ARR9) from Arabidopsis thaliana (Mouse-ear cress).